The chain runs to 379 residues: Queuine tRNA-ribosyltransferase (379 aa).

The active-site Proton acceptor is Asp-94. Residues Asp-94–Phe-98, Asp-148, Gln-191, and Gly-218 each bind substrate. Positions Gly-249 to Ala-255 are RNA binding. The active-site Nucleophile is the Asp-268. The segment at Thr-273–Arg-277 is RNA binding; important for wobble base 34 recognition. Residues Cys-306, Cys-308, Cys-311, and His-337 each coordinate Zn(2+).

It belongs to the queuine tRNA-ribosyltransferase family. In terms of assembly, homodimer. Within each dimer, one monomer is responsible for RNA recognition and catalysis, while the other monomer binds to the replacement base PreQ1. The cofactor is Zn(2+).

It carries out the reaction 7-aminomethyl-7-carbaguanine + guanosine(34) in tRNA = 7-aminomethyl-7-carbaguanosine(34) in tRNA + guanine. The protein operates within tRNA modification; tRNA-queuosine biosynthesis. Its function is as follows. Catalyzes the base-exchange of a guanine (G) residue with the queuine precursor 7-aminomethyl-7-deazaguanine (PreQ1) at position 34 (anticodon wobble position) in tRNAs with GU(N) anticodons (tRNA-Asp, -Asn, -His and -Tyr). Catalysis occurs through a double-displacement mechanism. The nucleophile active site attacks the C1' of nucleotide 34 to detach the guanine base from the RNA, forming a covalent enzyme-RNA intermediate. The proton acceptor active site deprotonates the incoming PreQ1, allowing a nucleophilic attack on the C1' of the ribose to form the product. After dissociation, two additional enzymatic reactions on the tRNA convert PreQ1 to queuine (Q), resulting in the hypermodified nucleoside queuosine (7-(((4,5-cis-dihydroxy-2-cyclopenten-1-yl)amino)methyl)-7-deazaguanosine). The sequence is that of Queuine tRNA-ribosyltransferase from Staphylococcus aureus (strain Mu3 / ATCC 700698).